The chain runs to 101 residues: Trp operon repressor homolog (101 aa).

Residues 59-82 mediate DNA binding; sequence QREIQQNLNTSAATITRGSNMLKL.

The protein belongs to the TrpR family. Homodimer.

Its subcellular location is the cytoplasm. This protein is an aporepressor. When complexed with L-tryptophan it binds the operator region of the trp operon and prevents the initiation of transcription. In Mannheimia succiniciproducens (strain KCTC 0769BP / MBEL55E), this protein is Trp operon repressor homolog.